A 217-amino-acid chain; its full sequence is Large ribosomal subunit protein uL3 (217 aa).

Belongs to the universal ribosomal protein uL3 family. Part of the 50S ribosomal subunit. Forms a cluster with proteins L14 and L19.

One of the primary rRNA binding proteins, it binds directly near the 3'-end of the 23S rRNA, where it nucleates assembly of the 50S subunit. The polypeptide is Large ribosomal subunit protein uL3 (Mycobacterium ulcerans (strain Agy99)).